Here is a 137-residue protein sequence, read N- to C-terminus: Small ribosomal subunit protein bS6 (137 aa).

Residues 96-137 (ITEASPMAKAKDERDTRRSSEERAPRAEATEEAEESAENTAE) are disordered. Positions 104-124 (KAKDERDTRRSSEERAPRAEA) are enriched in basic and acidic residues. The segment covering 125 to 137 (TEEAEESAENTAE) has biased composition (acidic residues).

The protein belongs to the bacterial ribosomal protein bS6 family.

Functionally, binds together with bS18 to 16S ribosomal RNA. This chain is Small ribosomal subunit protein bS6, found in Shewanella pealeana (strain ATCC 700345 / ANG-SQ1).